We begin with the raw amino-acid sequence, 131 residues long: Small ribosomal subunit protein uS8 (131 aa).

Belongs to the universal ribosomal protein uS8 family. Part of the 30S ribosomal subunit. Contacts proteins S5 and S12.

One of the primary rRNA binding proteins, it binds directly to 16S rRNA central domain where it helps coordinate assembly of the platform of the 30S subunit. The polypeptide is Small ribosomal subunit protein uS8 (Vesicomyosocius okutanii subsp. Calyptogena okutanii (strain HA)).